The primary structure comprises 205 residues: UPF0301 protein Bind_0718 (205 aa).

This sequence belongs to the UPF0301 (AlgH) family.

The chain is UPF0301 protein Bind_0718 from Beijerinckia indica subsp. indica (strain ATCC 9039 / DSM 1715 / NCIMB 8712).